The sequence spans 273 residues: 2-dehydro-3-deoxyphosphooctonate aldolase (273 aa).

This sequence belongs to the KdsA family.

It localises to the cytoplasm. It catalyses the reaction D-arabinose 5-phosphate + phosphoenolpyruvate + H2O = 3-deoxy-alpha-D-manno-2-octulosonate-8-phosphate + phosphate. The protein operates within carbohydrate biosynthesis; 3-deoxy-D-manno-octulosonate biosynthesis; 3-deoxy-D-manno-octulosonate from D-ribulose 5-phosphate: step 2/3. Its pathway is bacterial outer membrane biogenesis; lipopolysaccharide biosynthesis. This Nitratidesulfovibrio vulgaris (strain ATCC 29579 / DSM 644 / CCUG 34227 / NCIMB 8303 / VKM B-1760 / Hildenborough) (Desulfovibrio vulgaris) protein is 2-dehydro-3-deoxyphosphooctonate aldolase.